The sequence spans 267 residues: RWD domain-containing protein 3 (267 aa).

Residues 7–114 form the RWD domain; the sequence is QELSALAAIF…LWTQQNLRHI (108 aa). Interaction with UBE2I/UBC9 stretches follow at residues 13–15 and 100–102; these read AAI and VHE.

As to quaternary structure, interacts with UBE2I/UBC9, NFKBIA, HIF1A and NCOA2.

The protein resides in the nucleus. It is found in the cytoplasm. Its function is as follows. Enhancer of SUMO conjugation. Via its interaction with UBE2I/UBC9, increases SUMO conjugation to proteins by promoting the binding of E1 and E2 enzymes, thioester linkage between SUMO and UBE2I/UBC9 and transfer of SUMO to specific target proteins which include HIF1A, PIAS, NFKBIA, NR3C1 and TOP1. Positively regulates the NF-kappa-B signaling pathway by enhancing the sumoylation of NF-kappa-B inhibitor alpha (NFKBIA), promoting its stabilization which consequently leads to an increased inhibition of NF-kappa-B transcriptional activity. Negatively regulates the hypoxia-inducible factor-1 alpha (HIF1A) signaling pathway by increasing the sumoylation of HIF1A, promoting its stabilization, transcriptional activity and the expression of its target gene VEGFA during hypoxia. Has no effect on ubiquitination. The chain is RWD domain-containing protein 3 (Rwdd3) from Rattus norvegicus (Rat).